A 343-amino-acid chain; its full sequence is Stimulator of interferon genes protein homolog (343 aa).

Asn84 carries N-linked (GlcNAc...) asparagine glycosylation. The next 2 membrane-spanning stretches (helical) occupy residues 87 to 107 (IYLI…TGNY) and 109 to 129 (NVMP…WSFT). Asn157 serves as a coordination point for 3',2'-cGAMP. The N-linked (GlcNAc...) asparagine glycan is linked to Asn187. The chain crosses the membrane as a helical span at residues 195 to 215 (LVILIPDEMFVNGVLESHLLD). 5 residues coordinate 3',2'-cGAMP: Arg232, Lys235, Glu255, Thr258, and Ser262. 2 N-linked (GlcNAc...) asparagine glycosylation sites follow: Asn270 and Asn333.

It belongs to the STING family.

The protein resides in the endoplasmic reticulum membrane. In terms of biological role, facilitator of innate immune signaling that binds cyclic dinucleotides produced in response to infection by bacteria and/or viruses, and promotes the activation of the NF-kappa-B transcription factor Rel (Relish). Recognizes and binds cyclic di-GMP (c-di-GMP), a cyclic dinucleotide messenger produced by bacteria such as L.monocytogenes, leading to activation of the peptidoglycan recognition protein (IMD) signaling pathway and activation of Rel (Relish). Innate immune response is triggered in response to double-stranded RNA from viruses delivered to the cytoplasm: Sting acts by specifically binding cyclic dinucleotides 3',2'-cGAMP and 2',3'-cGAMP produced by cGlr1 and cGlr2 in response to RNA virus in the cytosol. Has a strong preference for 3',2'-cGAMP compared to other cyclic dinucleotides such as 2',3'-cGAMP or 3'3'-c-di-GMP. Upon binding to 3',2'-cGAMP, activates an antiviral immune response, leading to the activation of Rel (Relish). Activated in brain in response to Zika virus infection, leading to autophagy. This chain is Stimulator of interferon genes protein homolog, found in Drosophila melanogaster (Fruit fly).